We begin with the raw amino-acid sequence, 1203 residues long: Delphilin (1203 aa).

Positions 1 to 79 (MPATNQGWPE…VPPSLGVLPG (79 aa)) constitute a PDZ 1 domain. The S-palmitoyl cysteine moiety is linked to residue alanine 3. The interval 215-270 (GAQRLRRSRSEERPERLLVSTRASAAPRRPDEPPPRKATSLLGGRTGPGGPRRTVR) is disordered. Low complexity predominate over residues 231–241 (LLVSTRASAAP). The PDZ 2 domain maps to 268–345 (TVRVYKGNKS…MPTLVVEEGP (78 aa)). Residue serine 303 is modified to Phosphoserine. Disordered stretches follow at residues 466-541 (ESSL…TPNP), 563-586 (IGTM…GPRT), 611-656 (LASP…PPSR), and 710-821 (SFVT…SHMS). Residues 500-509 (RSQGLETSLS) show a composition bias toward polar residues. 4 positions are modified to phosphoserine: serine 572, serine 613, serine 644, and serine 647. The span at 611–625 (LASPSSSESHPYASL) shows a compositional bias: low complexity. Over residues 715–740 (ERSSASECVSSSEEGSSLTYSSISDH) the composition is skewed to low complexity. Residues 741–756 (IPPPPLSPPPPPPLPF) show a composition bias toward pro residues. Positions 774–784 (QSLTKPLTQIN) are enriched in polar residues. Pro residues predominate over residues 786–803 (PVPPPPPPPLPPPVPCAP). The FH2 domain maps to 812–1203 (HRRSETSHMS…SSGMVSPLAW (392 aa)).

Interacts with C-terminus of the glutamate receptor GRID2 via PDZ domain. Isoform 2 also interacts with Profilin-2/PFN2 and with the monocarboxylate transporter SLC16A7 via PDZ domain. The interaction of isoform 2 with GRID2 is dependent on GRID2 phosphorylation by PKA. In terms of processing, isoform 2 is palmitoylated. Palmitoylation of isoform 2 is necessary for the enhanced cell surface expression of GRID2, and is also responsible for the accumulation of isoform 2 within dendritic spines. Isoform 1 and isoform 2 are differentially localized, probably modulating GRID2 signaling in neurons. Isoform 1 is expressed in the cerebellum, but not in the cerebral cortex. Isoform 2 is expressed in the cell body of purkinge cells of the cerebellum and weakly expressed in the cerebrum and the brainstem as well as various nuclei of the thalamus. Isoform 2 is highly expressed in the cerebral cortex than in the cerebellum. Isoform 3 is expressed in the cerebellum and cerebrum.

The protein resides in the postsynaptic cell membrane. Its subcellular location is the cell projection. It is found in the dendritic spine. It localises to the synapse. The protein localises to the cell membrane. In terms of biological role, postsynaptic scaffolding protein at the Purkinje cell synapse, where it may serve to link GRID2 with actin cytoskeleton and various signaling molecules. This chain is Delphilin (Grid2ip), found in Mus musculus (Mouse).